Here is a 471-residue protein sequence, read N- to C-terminus: Transcription initiation factor TFIID subunit 7-like (471 aa).

Disordered regions lie at residues 1–84, 192–211, and 328–377; these read MERG…RQGT, SPEG…TGPT, and EMMG…EELE. Phosphoserine is present on S199. A compositionally biased stretch (acidic residues) spans 347–377; that stretch reads GDDDDDEDEDDEDYGNEKEEEETDNSEEELE. Residues 358–433 are a coiled coil; sequence EDYGNEKEEE…QKELLRKVEN (76 aa).

This sequence belongs to the TAF7 family. As to quaternary structure, TFIID is composed of TATA binding protein (TBP) and a number of TBP-associated factors (TAFs). TAF7L may replace TAF7 in a spermatogenesis-specific form of TFIID. Interacts with TBP; the interaction occurs in a sub-population of cells (pachytene and haploid round spermatids) and is developmentally regulated through differential intracellular localization of the two proteins. Interacts with TAF1. Testis-specific (at protein level). Expressed during spermatogenesis from spermatogonia stage up to the stage of round spermatids.

It localises to the nucleus. The protein localises to the cytoplasm. Its function is as follows. Probably functions as a spermatogenesis-specific component of the DNA-binding general transcription factor complex TFIID, a multimeric protein complex that plays a central role in mediating promoter responses to various activators and repressors. May play a role in spermatogenesis. This is Transcription initiation factor TFIID subunit 7-like (Taf7l) from Mus musculus (Mouse).